The following is a 381-amino-acid chain: Probable serine/threonine-protein kinase PBL22 (381 aa).

Cys-3 carries S-palmitoyl cysteine lipidation. A Phosphothreonine modification is found at Thr-64. The Protein kinase domain occupies 75–351; that stretch reads FREGNIIGKG…GDVVVAFEYI (277 aa). Residues 81-89 and Lys-103 each bind ATP; that span reads IGKGGFGSV. A Phosphotyrosine modification is found at Tyr-148. The active-site Proton acceptor is the Asp-201. Ser-235 carries the phosphoserine modification. Residues Thr-236 and Thr-241 each carry the phosphothreonine modification. Tyr-249 carries the post-translational modification Phosphotyrosine. The disordered stretch occupies residues 361–381; that stretch reads RRTARKSTDSNRLRRETKQSY.

Belongs to the protein kinase superfamily. Ser/Thr protein kinase family. Palmitoylation at Cys-3 and Cys-6 are required for plasma membrane location.

The protein localises to the cell membrane. It catalyses the reaction L-seryl-[protein] + ATP = O-phospho-L-seryl-[protein] + ADP + H(+). The enzyme catalyses L-threonyl-[protein] + ATP = O-phospho-L-threonyl-[protein] + ADP + H(+). Its function is as follows. May be involved in plant defense signaling. This is Probable serine/threonine-protein kinase PBL22 from Arabidopsis thaliana (Mouse-ear cress).